The sequence spans 149 residues: Calmodulin (149 aa).

Alanine 2 carries the post-translational modification N-acetylalanine. EF-hand domains are found at residues 8-43 (EQIAEFKEAFSLFDKDGDGCITTKELGTVMRSLGQN), 44-79 (PTEAELQDMINEVDADGNGTIDFPELLNLMARKMKD), 81-116 (DSEEELKEAFRVFDKDQNGFISAAELRHVMTNLGEK), and 117-149 (LTDEEVDEMIREADVDGDGQINYEEFVKVMMAK). Residues aspartate 21, aspartate 23, aspartate 25, cysteine 27, glutamate 32, aspartate 57, aspartate 59, asparagine 61, threonine 63, glutamate 68, aspartate 94, aspartate 96, asparagine 98, and glutamate 105 each coordinate Ca(2+). Position 116 is an N6,N6,N6-trimethyllysine (lysine 116). Residues aspartate 130, aspartate 132, aspartate 134, glutamine 136, and glutamate 141 each coordinate Ca(2+).

This sequence belongs to the calmodulin family.

In terms of biological role, calmodulin mediates the control of a large number of enzymes, ion channels and other proteins by Ca(2+). Among the enzymes to be stimulated by the calmodulin-Ca(2+) complex are a number of protein kinases and phosphatases. The sequence is that of Calmodulin (CALM1) from Zea mays (Maize).